Here is a 370-residue protein sequence, read N- to C-terminus: Coiled-coil domain-containing protein 89 (370 aa).

The tract at residues 1–38 is disordered; it reads MPQEESAPRMDTPSSEEPLDKQNRKLEDQEEEMGFKEL. Position 12 is a phosphothreonine (Thr-12). Positions 18 to 38 are enriched in basic and acidic residues; sequence PLDKQNRKLEDQEEEMGFKEL. A coiled-coil region spans residues 19–346; the sequence is LDKQNRKLED…YDELRLQSEA (328 aa).

This sequence belongs to the CCDC89 family. As to quaternary structure, interacts with HEY1.

It is found in the cytoplasm. Its subcellular location is the nucleus. This is Coiled-coil domain-containing protein 89 from Bos taurus (Bovine).